The following is a 469-amino-acid chain: UDP-N-acetylmuramate--L-alanine ligase (469 aa).

112 to 118 (GTHGKTT) contributes to the ATP binding site.

It belongs to the MurCDEF family.

It is found in the cytoplasm. It catalyses the reaction UDP-N-acetyl-alpha-D-muramate + L-alanine + ATP = UDP-N-acetyl-alpha-D-muramoyl-L-alanine + ADP + phosphate + H(+). It participates in cell wall biogenesis; peptidoglycan biosynthesis. Functionally, cell wall formation. This Methylibium petroleiphilum (strain ATCC BAA-1232 / LMG 22953 / PM1) protein is UDP-N-acetylmuramate--L-alanine ligase.